We begin with the raw amino-acid sequence, 143 residues long: Hemoglobin subunit alpha-1 (143 aa).

Ser2 bears the N-acetylserine mark. The Globin domain maps to 2 to 143; the sequence is SLSTKDKETV…VSLALAEKYR (142 aa). His60 is a binding site for O2. Heme b is bound at residue His89.

The protein belongs to the globin family. In terms of assembly, hb1 is a heterotetramer of two alpha-1 chains and two beta-1 chains. Red blood cells.

In terms of biological role, involved in oxygen transport from gills to the various peripheral tissues. This is Hemoglobin subunit alpha-1 from Liparis tunicatus (Kelp snailfish).